A 141-amino-acid polypeptide reads, in one-letter code: Nucleoside diphosphate kinase (141 aa).

Residues lysine 11, phenylalanine 59, arginine 87, threonine 93, arginine 104, and asparagine 114 each contribute to the ATP site. The Pros-phosphohistidine intermediate role is filled by histidine 117.

Belongs to the NDK family. As to quaternary structure, homotetramer. Mg(2+) is required as a cofactor.

It localises to the cytoplasm. The enzyme catalyses a 2'-deoxyribonucleoside 5'-diphosphate + ATP = a 2'-deoxyribonucleoside 5'-triphosphate + ADP. The catalysed reaction is a ribonucleoside 5'-diphosphate + ATP = a ribonucleoside 5'-triphosphate + ADP. Major role in the synthesis of nucleoside triphosphates other than ATP. The ATP gamma phosphate is transferred to the NDP beta phosphate via a ping-pong mechanism, using a phosphorylated active-site intermediate. This chain is Nucleoside diphosphate kinase, found in Bordetella bronchiseptica (strain ATCC BAA-588 / NCTC 13252 / RB50) (Alcaligenes bronchisepticus).